The following is a 612-amino-acid chain: Dihydroxy-acid dehydratase (612 aa).

Asp-81 lines the Mg(2+) pocket. Residue Cys-122 coordinates [2Fe-2S] cluster. Mg(2+) contacts are provided by Asp-123 and Lys-124. An N6-carboxylysine modification is found at Lys-124. A [2Fe-2S] cluster-binding site is contributed by Cys-196. Residue Glu-492 coordinates Mg(2+). Catalysis depends on Ser-518, which acts as the Proton acceptor.

The protein belongs to the IlvD/Edd family. As to quaternary structure, homodimer. Requires [2Fe-2S] cluster as cofactor. It depends on Mg(2+) as a cofactor.

It carries out the reaction (2R)-2,3-dihydroxy-3-methylbutanoate = 3-methyl-2-oxobutanoate + H2O. It catalyses the reaction (2R,3R)-2,3-dihydroxy-3-methylpentanoate = (S)-3-methyl-2-oxopentanoate + H2O. It functions in the pathway amino-acid biosynthesis; L-isoleucine biosynthesis; L-isoleucine from 2-oxobutanoate: step 3/4. Its pathway is amino-acid biosynthesis; L-valine biosynthesis; L-valine from pyruvate: step 3/4. Functions in the biosynthesis of branched-chain amino acids. Catalyzes the dehydration of (2R,3R)-2,3-dihydroxy-3-methylpentanoate (2,3-dihydroxy-3-methylvalerate) into 2-oxo-3-methylpentanoate (2-oxo-3-methylvalerate) and of (2R)-2,3-dihydroxy-3-methylbutanoate (2,3-dihydroxyisovalerate) into 2-oxo-3-methylbutanoate (2-oxoisovalerate), the penultimate precursor to L-isoleucine and L-valine, respectively. The protein is Dihydroxy-acid dehydratase of Paracoccus denitrificans (strain Pd 1222).